The sequence spans 522 residues: Tyrosine-protein phosphatase 1 (522 aa).

The interval 32–63 (RSNSSISLSSSSHSSFSRMGSLGSLPTNSGSS) is disordered. A compositionally biased stretch (low complexity) spans 33 to 63 (SNSSISLSSSSHSSFSRMGSLGSLPTNSGSS). One can recognise a Tyrosine-protein phosphatase domain in the interval 97–471 (IKEEFRLLEE…LFCYKTILDE (375 aa)). The Phosphocysteine intermediate role is filled by C310. The interval 327–426 (MKKLDHYFKQ…DDAAESDLKY (100 aa)) is PTPase insert (Asn-rich). A compositionally biased stretch (low complexity) spans 382–410 (NNNNNNNLNNNNNINNNSNGSNNTPQTEP). A disordered region spans residues 382–420 (NNNNNNNLNNNNNINNNSNGSNNTPQTEPNNEEDDDDAA). Over residues 411 to 420 (NNEEDDDDAA) the composition is skewed to acidic residues.

The protein belongs to the protein-tyrosine phosphatase family. Non-receptor class subfamily. As to expression, expressed predominantly in anterior-like cells and to a lesser degree in prestalk cells.

The protein resides in the cytoplasm. Its subcellular location is the cell membrane. It catalyses the reaction O-phospho-L-tyrosyl-[protein] + H2O = L-tyrosyl-[protein] + phosphate. In terms of biological role, may have a role in growth and in the early stages of development. Affects the timing of development. This is Tyrosine-protein phosphatase 1 (ptpA1-1) from Dictyostelium discoideum (Social amoeba).